A 99-amino-acid polypeptide reads, in one-letter code: Small integral membrane protein 14 (99 aa).

At 1 to 49 the chain is on the lumenal side; that stretch reads MAEGGFDPCECVCSHEHAMRRLINLLRQSQSYCTDTECLQELPGPSSDN. Residues 50–70 traverse the membrane as a helical segment; that stretch reads GISITMILMAWMVIAVILFLL. At 71 to 99 the chain is on the cytoplasmic side; it reads RPPNLRGSNLTGKPASPHNGQDPPAPPVD. Positions 78 to 99 are disordered; the sequence is SNLTGKPASPHNGQDPPAPPVD.

The protein resides in the endoplasmic reticulum membrane. The protein is Small integral membrane protein 14 (SMIM14) of Bos taurus (Bovine).